Here is a 385-residue protein sequence, read N- to C-terminus: Glycine/sarcosine/betaine reductase complex component C subunit alpha (385 aa).

The active site involves cysteine 359.

Heterooctamer of four alpha and four beta subunits. Component of the glycine, sarcosine and betaine reductase complexes, together with proteins A and B.

The enzyme catalyses acetyl phosphate + [thioredoxin]-disulfide + NH4(+) + H2O = [thioredoxin]-dithiol + glycine + phosphate + H(+). It carries out the reaction acetyl phosphate + methylamine + [thioredoxin]-disulfide + H2O = sarcosine + [thioredoxin]-dithiol + phosphate + H(+). The catalysed reaction is acetyl phosphate + trimethylamine + [thioredoxin]-disulfide + H2O = glycine betaine + [thioredoxin]-dithiol + phosphate + H(+). In the first step of glycine, betaine and sarcosine reductases, the substrate is bound to component PB via a Schiff base intermediate. Then the PB-activated substrate is nucleophilically attacked by the selenol anion of component PA to transform it to a carboxymethylated selenoether and the respective amine. By action of component PC, acetyl phosphate is formed, leaving component PA in its oxidized state. Finally component PA becomes reduced by the thioredoxin system to start a new catalytic cycle of reductive deamination. This is Glycine/sarcosine/betaine reductase complex component C subunit alpha (grdD) from Peptoclostridium acidaminophilum (Eubacterium acidaminophilum).